The chain runs to 667 residues: E3 ubiquitin-protein ligase RNF6 (667 aa).

Disordered stretches follow at residues 1 to 25, 75 to 100, 116 to 216, 295 to 355, 396 to 419, 507 to 532, and 537 to 556; these read MDPS…RRWQ, KEQL…RAHS, GNVT…QGSF, FSSR…TPLS, ETRD…STVE, GDAA…GAEM, and EPAP…QLGR. A compositionally biased stretch (low complexity) spans 79–90; it reads ASQPGSDSAASD. Residues 116 to 139 show a composition bias toward polar residues; the sequence is GNVTRSGQNGNQSWRAVSRTNPNS. Residues 150-163 show a composition bias toward basic and acidic residues; that stretch reads INPDNRGSEMHGED. The segment covering 191–200 has biased composition (low complexity); the sequence is SQTSMSSSGP. A compositionally biased stretch (polar residues) spans 296–327; that stretch reads SSRSRSPIQRQNGTVHHNSQRQGRPVQQTGRN. Over residues 516 to 530 the composition is skewed to low complexity; that stretch reads HGRASSQASQAQDGA. Serine 559 carries the phosphoserine modification. An RING-type; atypical zinc finger spans residues 614 to 655; that stretch reads CSVCISDYVAGNKLRQLPCLHEFHIHCIDRWLSENCTCPVCR.

The protein belongs to the RNF12 family. As to expression, widely expressed with higher expression in the testis in both germ cells and Sertoli cells.

Its subcellular location is the nucleus. It is found in the cytoplasm. The protein localises to the cell projection. It localises to the axon. The protein resides in the PML body. The catalysed reaction is S-ubiquitinyl-[E2 ubiquitin-conjugating enzyme]-L-cysteine + [acceptor protein]-L-lysine = [E2 ubiquitin-conjugating enzyme]-L-cysteine + N(6)-ubiquitinyl-[acceptor protein]-L-lysine.. It participates in protein modification; protein ubiquitination. E3 ubiquitin-protein ligase mediating 'Lys-48'-linked polyubiquitination of LIMK1 and its subsequent targeting to the proteasome for degradation. Negatively regulates axonal outgrowth through regulation of the LIMK1 turnover. Mediates 'Lys-6' and 'Lys-27'-linked polyubiquitination of AR/androgen receptor thereby modulating its transcriptional activity. May also bind DNA and function as a transcriptional regulator. Mediates polyubiquitination of QKI in macrophages, leading to its degradation. This is E3 ubiquitin-protein ligase RNF6 from Mus musculus (Mouse).